A 243-amino-acid polypeptide reads, in one-letter code: tRNA1(Val) (adenine(37)-N6)-methyltransferase (243 aa).

This sequence belongs to the methyltransferase superfamily. tRNA (adenine-N(6)-)-methyltransferase family.

The protein localises to the cytoplasm. It catalyses the reaction adenosine(37) in tRNA1(Val) + S-adenosyl-L-methionine = N(6)-methyladenosine(37) in tRNA1(Val) + S-adenosyl-L-homocysteine + H(+). Its function is as follows. Specifically methylates the adenine in position 37 of tRNA(1)(Val) (anticodon cmo5UAC). This Shewanella loihica (strain ATCC BAA-1088 / PV-4) protein is tRNA1(Val) (adenine(37)-N6)-methyltransferase.